Here is a 178-residue protein sequence, read N- to C-terminus: Large ribosomal subunit protein uL6 (178 aa).

This sequence belongs to the universal ribosomal protein uL6 family. As to quaternary structure, part of the 50S ribosomal subunit.

Its function is as follows. This protein binds to the 23S rRNA, and is important in its secondary structure. It is located near the subunit interface in the base of the L7/L12 stalk, and near the tRNA binding site of the peptidyltransferase center. This Corynebacterium urealyticum (strain ATCC 43042 / DSM 7109) protein is Large ribosomal subunit protein uL6.